The chain runs to 335 residues: Anthranilate phosphoribosyltransferase 2 (335 aa).

5-phospho-alpha-D-ribose 1-diphosphate contacts are provided by residues glycine 70, 73–74 (GD), threonine 78, 80–83 (NIST), 98–106 (KHGNRSASS), and serine 110. Glycine 70 is an anthranilate binding site. Serine 82 contributes to the Mg(2+) binding site. Asparagine 101 serves as a coordination point for anthranilate. Anthranilate is bound at residue arginine 156. Mg(2+) contacts are provided by aspartate 215 and glutamate 216.

It belongs to the anthranilate phosphoribosyltransferase family. As to quaternary structure, homodimer. The cofactor is Mg(2+).

It catalyses the reaction N-(5-phospho-beta-D-ribosyl)anthranilate + diphosphate = 5-phospho-alpha-D-ribose 1-diphosphate + anthranilate. It functions in the pathway amino-acid biosynthesis; L-tryptophan biosynthesis; L-tryptophan from chorismate: step 2/5. In terms of biological role, catalyzes the transfer of the phosphoribosyl group of 5-phosphorylribose-1-pyrophosphate (PRPP) to anthranilate to yield N-(5'-phosphoribosyl)-anthranilate (PRA). In Streptomyces coelicolor (strain ATCC BAA-471 / A3(2) / M145), this protein is Anthranilate phosphoribosyltransferase 2.